The primary structure comprises 475 residues: Ribulose bisphosphate carboxylase large chain (475 aa).

Residues 1 to 2 constitute a propeptide that is removed on maturation; that stretch reads MS. Pro3 bears the N-acetylproline mark. N6,N6,N6-trimethyllysine is present on Lys14. 2 residues coordinate substrate: Asn123 and Thr173. The active-site Proton acceptor is the Lys175. Lys177 serves as a coordination point for substrate. Residues Lys201, Asp203, and Glu204 each contribute to the Mg(2+) site. Lys201 carries the N6-carboxylysine modification. His294 acts as the Proton acceptor in catalysis. Arg295, His327, and Ser379 together coordinate substrate.

It belongs to the RuBisCO large chain family. Type I subfamily. In terms of assembly, heterohexadecamer of 8 large chains and 8 small chains; disulfide-linked. The disulfide link is formed within the large subunit homodimers. The cofactor is Mg(2+). In terms of processing, the disulfide bond which can form in the large chain dimeric partners within the hexadecamer appears to be associated with oxidative stress and protein turnover.

The protein localises to the plastid. It is found in the chloroplast. The enzyme catalyses 2 (2R)-3-phosphoglycerate + 2 H(+) = D-ribulose 1,5-bisphosphate + CO2 + H2O. It carries out the reaction D-ribulose 1,5-bisphosphate + O2 = 2-phosphoglycolate + (2R)-3-phosphoglycerate + 2 H(+). Its function is as follows. RuBisCO catalyzes two reactions: the carboxylation of D-ribulose 1,5-bisphosphate, the primary event in carbon dioxide fixation, as well as the oxidative fragmentation of the pentose substrate in the photorespiration process. Both reactions occur simultaneously and in competition at the same active site. The sequence is that of Ribulose bisphosphate carboxylase large chain from Buxus microphylla (Littleleaf boxwood).